Here is a 109-residue protein sequence, read N- to C-terminus: Nucleoid-associated protein CGSHiEE_00780 (109 aa).

The protein belongs to the YbaB/EbfC family. As to quaternary structure, homodimer.

It is found in the cytoplasm. It localises to the nucleoid. Functionally, binds to DNA and alters its conformation. May be involved in regulation of gene expression, nucleoid organization and DNA protection. In Haemophilus influenzae (strain PittEE), this protein is Nucleoid-associated protein CGSHiEE_00780.